Here is a 327-residue protein sequence, read N- to C-terminus: MRPLSLKGHERALTRVRFNREGDLTFSCAKDKKPCVWYTENGERIGSYDGHNGAVWDIDVSWDTSKCVTASGDLTVKIWDAELGSCIYTINHQTPMKSCGFSYSGNLVCYTTQKMTKNLSTVQVRDLRDGNQMAEGAESFFSTQFDVNATTALFSQMDDIITIGFESGLLQQYDLRNPDSPINTNEVVHRYSIQDLQLSPRGDFLISASRDKTAALLDVNDLKKLKQYKSERPVNSACIAPNRDHICLGGGEDAMQVTQTAVSAGHFEAKIYHMVFEEEFARFKGHFGPINTMAWHPSGSIIATGGEDGYVRIQEFDEDYLGFTYDF.

WD repeat units follow at residues 8-49 (GHER…GSYD), 51-89 (HNGA…CIYT), 188-227 (VHRY…KLKQ), 229-268 (KSER…GHFE), and 285-324 (GHFG…LGFT).

Belongs to the eIF-3 subunit I family. In terms of assembly, component of the eukaryotic translation initiation factor 3 (eIF-3) complex.

Its subcellular location is the cytoplasm. Component of the eukaryotic translation initiation factor 3 (eIF-3) complex, which is involved in protein synthesis of a specialized repertoire of mRNAs and, together with other initiation factors, stimulates binding of mRNA and methionyl-tRNAi to the 40S ribosome. The eIF-3 complex specifically targets and initiates translation of a subset of mRNAs involved in cell proliferation. This is Eukaryotic translation initiation factor 3 subunit I from Caenorhabditis briggsae.